Reading from the N-terminus, the 326-residue chain is Virulence factor CaO19.6688 (326 aa).

5 disordered regions span residues 19 to 91 (FNSL…KLPS), 112 to 137 (EEDNQEQQLQDGEPLSAPTTNNGTTK), 161 to 184 (NTTITSSRSNPTNSTPTSNDPSFP), 222 to 245 (NVGQTPNNNNNNNHGVSETENDLL), and 276 to 326 (YEYG…PKIK). Composition is skewed to low complexity over residues 21–42 (SLKSSPSSTSSLSSISTSSSSS), 53–78 (NRNTSNSQNSSISTAPTTATAANTTP), and 117–137 (EQQLQDGEPLSAPTTNNGTTK).

In terms of biological role, virulence factor involved in pathogen-host interaction. Modulates host pro-inflammatory cytokine interleukin-1 beta (IL1B) expression. The chain is Virulence factor CaO19.6688 from Candida albicans (strain SC5314 / ATCC MYA-2876) (Yeast).